Reading from the N-terminus, the 135-residue chain is Hemoglobin subunit beta-2 (135 aa).

The region spanning 2 to 135 (HWTAEEKALV…VVDALSKGYH (134 aa)) is the Globin domain. His57 and His81 together coordinate heme b.

The protein belongs to the globin family. As to quaternary structure, hb 2 is a heterotetramer of two alpha and two beta-2 chains. In terms of tissue distribution, red blood cells (at protein level).

Involved in oxygen transport from gills to the various peripheral tissues. This chain is Hemoglobin subunit beta-2, found in Somniosus microcephalus (Greenland sleeper shark).